The chain runs to 183 residues: MNFKIYETKIREEFELVLKWMHNEFIKLRTGRATPAILDGILVNYYGSMMPINQLANISVPEPRVLAIKPYDRSSIKDIATAINASNLGVNPQVDVDIIRLTFAAPTEEVRKNLVKKAKQVGEEAKIRVRHIRQEAQDLFKKDSTTIEDDKKFFQTELDNLTKELNKEIETVVSHKEKDIMTV.

Belongs to the RRF family.

It localises to the cytoplasm. Responsible for the release of ribosomes from messenger RNA at the termination of protein biosynthesis. May increase the efficiency of translation by recycling ribosomes from one round of translation to another. The protein is Ribosome-recycling factor of Ureaplasma parvum serovar 3 (strain ATCC 27815 / 27 / NCTC 11736).